The following is a 607-amino-acid chain: Dolichyl-diphosphooligosaccharide--protein glycosyltransferase subunit 1 (607 aa).

The first 23 residues, 1 to 23 (MEAPVARLFLLLLLGSWTPAPGS), serve as a signal peptide directing secretion. At 24–434 (ASSEAPPLIN…VVHYTFNKVL (411 aa)) the chain is on the lumenal side. Position 187 is an N6-acetyllysine (K187). N299 carries an N-linked (GlcNAc...) asparagine glycan. A helical membrane pass occupies residues 435–455 (MLQEPLLVVAAFYILFFTVII). The Cytoplasmic segment spans residues 456 to 607 (YVRLDFSITK…TKIDHILDAL (152 aa)). The residue at position 538 (K538) is an N6-acetyllysine; alternate. A Glycyl lysine isopeptide (Lys-Gly) (interchain with G-Cter in SUMO2); alternate cross-link involves residue K538.

This sequence belongs to the OST1 family. In terms of assembly, component of the oligosaccharyltransferase (OST) complex. OST exists in two different complex forms which contain common core subunits RPN1, RPN2, OST48, OST4, DAD1 and TMEM258, either STT3A or STT3B as catalytic subunits, and form-specific accessory subunits. STT3A complex assembly occurs through the formation of 3 subcomplexes. Subcomplex 1 contains RPN1 and TMEM258, subcomplex 2 contains the STT3A-specific subunits STT3A, DC2/OSTC, and KCP2 as well as the core subunit OST4, and subcomplex 3 contains RPN2, DAD1, and OST48. The STT3A complex can form stable complexes with the Sec61 complex or with both the Sec61 and TRAP complexes. Interacts with TMEM35A/NACHO. In terms of processing, ubiquitinated by the ECS(ASB11) complex. Ufmylated by UFL1 in response to endoplasmic reticulum stress, promoting reticulophagy of endoplasmic reticulum sheets.

The protein resides in the endoplasmic reticulum membrane. It participates in protein modification; protein glycosylation. In terms of biological role, subunit of the oligosaccharyl transferase (OST) complex that catalyzes the initial transfer of a defined glycan (Glc(3)Man(9)GlcNAc(2) in eukaryotes) from the lipid carrier dolichol-pyrophosphate to an asparagine residue within an Asn-X-Ser/Thr consensus motif in nascent polypeptide chains, the first step in protein N-glycosylation. N-glycosylation occurs cotranslationally and the complex associates with the Sec61 complex at the channel-forming translocon complex that mediates protein translocation across the endoplasmic reticulum (ER). All subunits are required for a maximal enzyme activity. The sequence is that of Dolichyl-diphosphooligosaccharide--protein glycosyltransferase subunit 1 from Macaca fascicularis (Crab-eating macaque).